Consider the following 454-residue polypeptide: MGSRLNFKSFVDGVSEQQPTVGTSLPLTRQNSVFSLTFDEFQNSWGGGIGKDFGSMNMDELLKNIWTAEESHSMMGNNTSYTNISNGNSGNTVINGGGNNIGGLAVGVGGESGGFFTGGSLQRQGSLTLPRTISQKRVDDVWKELMKEDDIGNGVVNGGTSGIPQRQQTLGEMTLEEFLVRAGVVREEPQPVESVTNFNGGFYGFGSNGGLGTASNGFVANQPQDLSGNGVAVRQDLLTAQTQPLQMQQPQMVQQPQMVQQPQQLIQTQERPFPKQTTIAFSNTVDVVNRSQPATQCQEVKPSILGIHNHPMNNNLLQAVDFKTGVTVAAVSPGSQMSPDLTPKSALDASLSPVPYMFGRVRKTGAVLEKVIERRQKRMIKNRESAARSRARKQAYTMELEAEIAQLKELNEELQKKQVEIMEKQKNQLLEPLRQPWGMGCKRQCLRRTLTGPW.

A phosphoserine mark is found at Ser-32, Ser-55, and Ser-126. Position 169 is a phosphothreonine (Thr-169). Residues 372-435 (IERRQKRMIK…KNQLLEPLRQ (64 aa)) enclose the bZIP domain. Residues 374 to 393 (RRQKRMIKNRESAARSRARK) are basic motif. The tract at residues 400–414 (LEAEIAQLKELNEEL) is leucine-zipper.

Belongs to the bZIP family. ABI5 subfamily. In terms of assembly, DNA-binding heterodimer. Interacts with ABI3 and the AFP proteins AFP1, AFP2, AFP3 and AFP4. As to expression, expressed in roots and flowers.

It localises to the nucleus. In terms of biological role, binds to the ABA-responsive element (ABRE). Mediates stress-responsive ABA signaling. In Arabidopsis thaliana (Mouse-ear cress), this protein is ABSCISIC ACID-INSENSITIVE 5-like protein 6 (ABF3).